Here is a 1583-residue protein sequence, read N- to C-terminus: Pentafunctional AROM polypeptide (1583 aa).

Residues 1–384 form a 3-dehydroquinate synthase region; it reads MSNPTKISIL…YETRASVVAN (384 aa). Residues 44 to 46, 81 to 84, 114 to 116, and aspartate 119 contribute to the NAD(+) site; these read DTN, EVSK, and GGV. 7-phospho-2-dehydro-3-deoxy-D-arabino-heptonate is bound at residue arginine 130. 139–140 is a binding site for NAD(+); sequence TT. Positions 146 and 152 each coordinate 7-phospho-2-dehydro-3-deoxy-D-arabino-heptonate. NAD(+) is bound at residue lysine 161. Position 162 (asparagine 162) interacts with 7-phospho-2-dehydro-3-deoxy-D-arabino-heptonate. Residues 179–182 and asparagine 190 each bind NAD(+); that span reads FLET. Glutamate 194 serves as a coordination point for Zn(2+). 7-phospho-2-dehydro-3-deoxy-D-arabino-heptonate is bound by residues 194–197 and lysine 250; that span reads EVIK. Glutamate 260 acts as the Proton acceptor; for 3-dehydroquinate synthase activity in catalysis. 7-phospho-2-dehydro-3-deoxy-D-arabino-heptonate-binding positions include 264–268 and histidine 271; that span reads RNLLN. Histidine 271 serves as a coordination point for Zn(2+). The active-site Proton acceptor; for 3-dehydroquinate synthase activity is the histidine 275. 7-phospho-2-dehydro-3-deoxy-D-arabino-heptonate-binding residues include histidine 287 and lysine 356. Histidine 287 contacts Zn(2+). Positions 397 to 842 are EPSP synthase; sequence VHPGVAQSSN…WDTLRQLFKV (446 aa). The For EPSP synthase activity role is filled by cysteine 824. The shikimate kinase stretch occupies residues 863–1055; sequence NASIYIIGMR…KEKEHSFFAS (193 aa). 870 to 877 is an ATP binding site; sequence GMRGAGKS. A 3-dehydroquinase region spans residues 1056 to 1276; it reads LTLPDLREAG…AAPGQLSATE (221 aa). Histidine 1179 acts as the Proton acceptor; for 3-dehydroquinate dehydratase activity in catalysis. The Schiff-base intermediate with substrate; for 3-dehydroquinate dehydratase activity role is filled by lysine 1207. Positions 1289–1583 are shikimate dehydrogenase; the sequence is PKKFAIFGSP…SARACSSPLI (295 aa).

It in the N-terminal section; belongs to the sugar phosphate cyclases superfamily. Dehydroquinate synthase family. This sequence in the 2nd section; belongs to the EPSP synthase family. In the 3rd section; belongs to the shikimate kinase family. The protein in the 4th section; belongs to the type-I 3-dehydroquinase family. It in the C-terminal section; belongs to the shikimate dehydrogenase family. Homodimer. Zn(2+) is required as a cofactor.

It is found in the cytoplasm. The catalysed reaction is 7-phospho-2-dehydro-3-deoxy-D-arabino-heptonate = 3-dehydroquinate + phosphate. It carries out the reaction 3-dehydroquinate = 3-dehydroshikimate + H2O. It catalyses the reaction shikimate + NADP(+) = 3-dehydroshikimate + NADPH + H(+). The enzyme catalyses shikimate + ATP = 3-phosphoshikimate + ADP + H(+). The catalysed reaction is 3-phosphoshikimate + phosphoenolpyruvate = 5-O-(1-carboxyvinyl)-3-phosphoshikimate + phosphate. Its pathway is metabolic intermediate biosynthesis; chorismate biosynthesis; chorismate from D-erythrose 4-phosphate and phosphoenolpyruvate: step 2/7. The protein operates within metabolic intermediate biosynthesis; chorismate biosynthesis; chorismate from D-erythrose 4-phosphate and phosphoenolpyruvate: step 3/7. It participates in metabolic intermediate biosynthesis; chorismate biosynthesis; chorismate from D-erythrose 4-phosphate and phosphoenolpyruvate: step 4/7. It functions in the pathway metabolic intermediate biosynthesis; chorismate biosynthesis; chorismate from D-erythrose 4-phosphate and phosphoenolpyruvate: step 5/7. Its pathway is metabolic intermediate biosynthesis; chorismate biosynthesis; chorismate from D-erythrose 4-phosphate and phosphoenolpyruvate: step 6/7. In terms of biological role, the AROM polypeptide catalyzes 5 consecutive enzymatic reactions in prechorismate polyaromatic amino acid biosynthesis. This is Pentafunctional AROM polypeptide (aromA) from Emericella nidulans (strain FGSC A4 / ATCC 38163 / CBS 112.46 / NRRL 194 / M139) (Aspergillus nidulans).